The chain runs to 130 residues: Small ribosomal subunit protein uS11 (130 aa).

The protein belongs to the universal ribosomal protein uS11 family. As to quaternary structure, part of the 30S ribosomal subunit. Interacts with proteins S7 and S18. Binds to IF-3.

Functionally, located on the platform of the 30S subunit, it bridges several disparate RNA helices of the 16S rRNA. Forms part of the Shine-Dalgarno cleft in the 70S ribosome. The polypeptide is Small ribosomal subunit protein uS11 (Sulfurimonas denitrificans (strain ATCC 33889 / DSM 1251) (Thiomicrospira denitrificans (strain ATCC 33889 / DSM 1251))).